A 267-amino-acid chain; its full sequence is Methylglyoxal reductase DkgB (267 aa).

The active-site Proton donor is the Y39. H97 is a substrate binding site. 179–231 is a binding site for NADP(+); that stretch reads MTLAYGKALKDEVIARIAVKHNATPVQVILAWAMGEGYSVIPSSTRRENLASN.

This sequence belongs to the aldo/keto reductase family. As to quaternary structure, monomer.

The protein localises to the cytoplasm. It catalyses the reaction hydroxyacetone + NADP(+) = methylglyoxal + NADPH + H(+). In terms of biological role, aldo-keto reductase that significantly contributes to cellular methylglyoxal detoxification by catalyzing the NADPH-dependent conversion of methylglyoxal to acetol. The polypeptide is Methylglyoxal reductase DkgB (Salmonella typhi).